A 338-amino-acid chain; its full sequence is 1-aminocyclopropane-1-carboxylate deaminase (338 aa).

Position 51 is an N6-(pyridoxal phosphate)lysine (Lys51). Ser78 functions as the Nucleophile in the catalytic mechanism.

The protein belongs to the ACC deaminase/D-cysteine desulfhydrase family. In terms of assembly, homotrimer. It depends on pyridoxal 5'-phosphate as a cofactor.

It carries out the reaction 1-aminocyclopropane-1-carboxylate + H2O = 2-oxobutanoate + NH4(+). Catalyzes a cyclopropane ring-opening reaction, the irreversible conversion of 1-aminocyclopropane-1-carboxylate (ACC) to ammonia and alpha-ketobutyrate. Allows growth on ACC as a nitrogen source. The chain is 1-aminocyclopropane-1-carboxylate deaminase from Burkholderia cenocepacia (strain ATCC BAA-245 / DSM 16553 / LMG 16656 / NCTC 13227 / J2315 / CF5610) (Burkholderia cepacia (strain J2315)).